The chain runs to 253 residues: Tryptophan synthase alpha chain (253 aa).

Residues E47 and D58 each act as proton acceptor in the active site.

The protein belongs to the TrpA family. As to quaternary structure, tetramer of two alpha and two beta chains.

The catalysed reaction is (1S,2R)-1-C-(indol-3-yl)glycerol 3-phosphate + L-serine = D-glyceraldehyde 3-phosphate + L-tryptophan + H2O. The protein operates within amino-acid biosynthesis; L-tryptophan biosynthesis; L-tryptophan from chorismate: step 5/5. The alpha subunit is responsible for the aldol cleavage of indoleglycerol phosphate to indole and glyceraldehyde 3-phosphate. The polypeptide is Tryptophan synthase alpha chain (Desulforapulum autotrophicum (strain ATCC 43914 / DSM 3382 / VKM B-1955 / HRM2) (Desulfobacterium autotrophicum)).